A 426-amino-acid polypeptide reads, in one-letter code: Histidine--tRNA ligase (426 aa).

Belongs to the class-II aminoacyl-tRNA synthetase family. As to quaternary structure, homodimer.

It is found in the cytoplasm. The enzyme catalyses tRNA(His) + L-histidine + ATP = L-histidyl-tRNA(His) + AMP + diphosphate + H(+). The polypeptide is Histidine--tRNA ligase (Geobacillus thermodenitrificans (strain NG80-2)).